The sequence spans 173 residues: Alpha-crystallin A chain (173 aa).

An N-acetylmethionine modification is found at M1. The required for complex formation with BFSP1 and BFSP2 stretch occupies residues 1–63; that stretch reads MDIAIQHPWF…RTVLDSGISE (63 aa). Residue Q6 is modified to Deamidated glutamine; partial. Residue S45 is modified to Phosphoserine. A Deamidated glutamine; partial modification is found at Q50. Residues 52 to 162 form the sHSP domain; it reads LFRTVLDSGI…GHSERAIPVS (111 aa). At K70 the chain carries N6-acetyllysine. A Deamidated glutamine; partial modification is found at Q90. K99 is subject to N6-acetyllysine. H100 is a binding site for Zn(2+). At N101 the chain carries Deamidated asparagine; partial. Zn(2+) contacts are provided by E102 and H107. S122 is subject to Phosphoserine. N123 bears the Deamidated asparagine; partial mark. The tract at residues 144-173 is disordered; it reads PKVPSGVDAGHSERAIPVSREEKPSSAPSS. Residues 153–167 show a composition bias toward basic and acidic residues; it reads GHSERAIPVSREEKP. H154 contacts Zn(2+). O-linked (GlcNAc) serine glycosylation is present at S162.

It belongs to the small heat shock protein (HSP20) family. As to quaternary structure, heteromer composed of three CRYAA and one CRYAB subunits. Inter-subunit bridging via zinc ions enhances stability, which is crucial as there is no protein turn over in the lens. Can also form homodimers and homotetramers (dimers of dimers) which serve as the building blocks of homooligomers. Within homooligomers, the zinc-binding motif is created from residues of 3 different molecules. His-100 and Glu-102 from one molecule are ligands of the zinc ion, and His-107 and His-154 residues from additional molecules complete the site with tetrahedral coordination geometry. Part of a complex required for lens intermediate filament formation composed of BFSP1, BFSP2 and CRYAA. In terms of processing, acetylation at Lys-70 may increase chaperone activity. Post-translationally, undergoes age-dependent proteolytical cleavage at the C-terminus.

The protein localises to the cytoplasm. Its subcellular location is the nucleus. Functionally, contributes to the transparency and refractive index of the lens. Acts as a chaperone, preventing aggregation of various proteins under a wide range of stress conditions. Required for the correct formation of lens intermediate filaments as part of a complex composed of BFSP1, BFSP2 and CRYAA. The protein is Alpha-crystallin A chain (CRYAA) of Ovis aries (Sheep).